The sequence spans 102 residues: ATP-dependent Clp protease adapter protein ClpS (102 aa).

Belongs to the ClpS family. Binds to the N-terminal domain of the chaperone ClpA.

Involved in the modulation of the specificity of the ClpAP-mediated ATP-dependent protein degradation. This chain is ATP-dependent Clp protease adapter protein ClpS, found in Nitrosospira multiformis (strain ATCC 25196 / NCIMB 11849 / C 71).